A 538-amino-acid polypeptide reads, in one-letter code: CTP synthase (538 aa).

Residues 1-267 are amidoligase domain; the sequence is MDRAKFIFVT…LTPIARRFNL (267 aa). Residue Ser-15 participates in CTP binding. Ser-15 contributes to the UTP binding site. Residues 16 to 21 and Asp-73 contribute to the ATP site; that span reads SLGKGI. Positions 73 and 141 each coordinate Mg(2+). CTP-binding positions include 148–150, 188–193, and Lys-224; these read DME and KTKPTQ. UTP is bound by residues 188-193 and Lys-224; that span reads KTKPTQ. In terms of domain architecture, Glutamine amidotransferase type-1 spans 292–538; it reads KIGFVGKYLS…DFIKSALSKS (247 aa). Position 351 (Gly-351) interacts with L-glutamine. The Nucleophile; for glutamine hydrolysis role is filled by Cys-378. L-glutamine is bound by residues 379–382, Glu-402, and Arg-469; that span reads LGMQ. Residues His-513 and Glu-515 contribute to the active site.

Belongs to the CTP synthase family. As to quaternary structure, homotetramer.

It carries out the reaction UTP + L-glutamine + ATP + H2O = CTP + L-glutamate + ADP + phosphate + 2 H(+). The catalysed reaction is L-glutamine + H2O = L-glutamate + NH4(+). The enzyme catalyses UTP + NH4(+) + ATP = CTP + ADP + phosphate + 2 H(+). Its pathway is pyrimidine metabolism; CTP biosynthesis via de novo pathway; CTP from UDP: step 2/2. With respect to regulation, allosterically activated by GTP, when glutamine is the substrate; GTP has no effect on the reaction when ammonia is the substrate. The allosteric effector GTP functions by stabilizing the protein conformation that binds the tetrahedral intermediate(s) formed during glutamine hydrolysis. Inhibited by the product CTP, via allosteric rather than competitive inhibition. In terms of biological role, catalyzes the ATP-dependent amination of UTP to CTP with either L-glutamine or ammonia as the source of nitrogen. Regulates intracellular CTP levels through interactions with the four ribonucleotide triphosphates. This is CTP synthase from Helicobacter pylori (strain ATCC 700392 / 26695) (Campylobacter pylori).